A 309-amino-acid chain; its full sequence is ADP,ATP carrier protein 1 (309 aa).

Solcar repeat units follow at residues 11–104 (SHFG…IKSL), 116–208 (KWFA…FKPV), and 216–302 (GSFV…LQLI). Transmembrane regions (helical) follow at residues 13–40 (FGVD…VKLL), 81–105 (TANV…KSLL), 114–134 (YAKW…LSLL), 184–205 (FVPS…YDSF), and 219–239 (VASF…SYPL). Positions 86 and 98 each coordinate ADP. ADP is bound at residue arginine 243. Residues 243–248 (RRRMMM) form an important for transport activity region. Positions 243–248 (RRRMMM) match the Nucleotide carrier signature motif motif. A helical transmembrane segment spans residues 279-299 (CGANIFRGVAAAGVISLYDQL).

It belongs to the mitochondrial carrier (TC 2.A.29) family. In terms of assembly, monomer.

It localises to the mitochondrion inner membrane. The catalysed reaction is ADP(in) + ATP(out) = ADP(out) + ATP(in). With respect to regulation, the matrix-open state (m-state) is inhibited by the membrane-permeable bongkrekic acid (BKA). The cytoplasmic-open state (c-state) is inhibited by the membrane-impermeable toxic inhibitor carboxyatractyloside (CATR). In terms of biological role, ADP:ATP antiporter that mediates import of ADP into the mitochondrial matrix for ATP synthesis, and export of ATP out to fuel the cell. Cycles between the cytoplasmic-open state (c-state) and the matrix-open state (m-state): operates by the alternating access mechanism with a single substrate-binding site intermittently exposed to either the cytosolic (c-state) or matrix (m-state) side of the inner mitochondrial membrane. The protein is ADP,ATP carrier protein 1 (AAC1) of Saccharomyces cerevisiae (strain ATCC 204508 / S288c) (Baker's yeast).